Reading from the N-terminus, the 614-residue chain is Probable glycerol-3-phosphate dehydrogenase (614 aa).

57–85 (DLVVVGGGSTGAGCALDGATRGLKVALVD) provides a ligand contact to FAD. The tract at residues 595–614 (MECPEEKRHRGERRLPPQEK) is disordered. Residues 598 to 614 (PEEKRHRGERRLPPQEK) show a composition bias toward basic and acidic residues.

The protein belongs to the FAD-dependent glycerol-3-phosphate dehydrogenase family. Requires FAD as cofactor.

It localises to the cytoplasm. The catalysed reaction is a quinone + sn-glycerol 3-phosphate = dihydroxyacetone phosphate + a quinol. The protein operates within polyol metabolism; glycerol degradation via glycerol kinase pathway; glycerone phosphate from sn-glycerol 3-phosphate (anaerobic route): step 1/1. This is Probable glycerol-3-phosphate dehydrogenase from Encephalitozoon cuniculi (strain GB-M1) (Microsporidian parasite).